The chain runs to 61 residues: Large ribosomal subunit protein uL30 (61 aa).

Belongs to the universal ribosomal protein uL30 family. Part of the 50S ribosomal subunit.

The chain is Large ribosomal subunit protein uL30 from Corynebacterium efficiens (strain DSM 44549 / YS-314 / AJ 12310 / JCM 11189 / NBRC 100395).